The primary structure comprises 106 residues: Iron-sulfur cluster assembly protein CyaY (106 aa).

This sequence belongs to the frataxin family.

Its function is as follows. Involved in iron-sulfur (Fe-S) cluster assembly. May act as a regulator of Fe-S biogenesis. In Yersinia enterocolitica serotype O:8 / biotype 1B (strain NCTC 13174 / 8081), this protein is Iron-sulfur cluster assembly protein CyaY.